The following is a 761-amino-acid chain: Prolyl endopeptidase FAP (761 aa).

At 1 to 4 (MKTW) the chain is on the cytoplasmic side. Residues 5–25 (LKTVFGVTTLAALALVVICIV) traverse the membrane as a helical; Signal-anchor for type II membrane protein segment. The Extracellular segment spans residues 26–761 (LRPSRVYKPE…FLKQCFSLSD (736 aa)). 3 N-linked (GlcNAc...) asparagine glycosylation sites follow: Asn-49, Asn-92, and Asn-99. Residues Glu-203 and Glu-204 each contribute to the substrate site. Asn-227 and Asn-314 each carry an N-linked (GlcNAc...) asparagine glycan. Cystine bridges form between Cys-321–Cys-332, Cys-438–Cys-441, and Cys-448–Cys-466. Ser-624 acts as the Charge relay system in catalysis. Cys-643 and Cys-756 are disulfide-bonded. N-linked (GlcNAc...) asparagine glycosylation occurs at Asn-679. Active-site charge relay system residues include Asp-702 and His-734.

Belongs to the peptidase S9B family. As to quaternary structure, homodimer; homodimerization is required for activity of both plasma membrane and soluble forms. The monomer is inactive. Heterodimer with DPP4. Interacts with PLAUR; the interaction occurs at the cell surface of invadopodia membranes. Interacts with ITGB1. Interacts with ITGA3. Associates with integrin alpha-3/beta-1; the association occurs in a collagen-dependent manner at the cell surface of invadopodia membranes. Post-translationally, N-glycosylated. The N-terminus may be blocked. Expressed strongly in uterus, pancreas, submaxillary gland and skin, less in lymph node, ovary, skeletal muscle, adrenal and bone marrow. Expressed in reactive stromal fibroblast in epithelial cancers. Expressed in melanocytes but not melanomas (at protein level). Detected in fibroblasts, in placenta, uterus, embryos from day 7-19 and in newborn mice (P1).

Its subcellular location is the cell surface. The protein localises to the cell membrane. It localises to the cell projection. It is found in the lamellipodium membrane. The protein resides in the invadopodium membrane. Its subcellular location is the ruffle membrane. The protein localises to the membrane. It localises to the secreted. The enzyme catalyses Hydrolysis of Pro-|-Xaa &gt;&gt; Ala-|-Xaa in oligopeptides.. It carries out the reaction Release of an N-terminal dipeptide, Xaa-Yaa-|-Zaa-, from a polypeptide, preferentially when Yaa is Pro, provided Zaa is neither Pro nor hydroxyproline.. Gelatinase activity is inhibited by serine-protease inhibitors, such as phenylmethylsulfonyl fluoride (PMSF), 4-(2-aminoethyl)-benzenesulfonyl fluoride hydrochloride (AEBSF), 4-amidino phenylsulfonyl fluoride (APSF) and diisopropyl fluorophosphate (DFP), N-ethylmaleimide (NEM) and phenylmethylsulfonyl fluoride (PMSF). Dipeptidyl peptidase activity is inhibited by 2,2'-azino-bis(3-ethylbenzthiazoline-6-sulfonic acid), diisopropylfluorophosphate (DFP). Prolyl endopeptidase activity is inhibited by the boronic acid peptide Ac-Gly-BoroPro, Ac-Gly-Pro-chloromethyl ketone and Thr-Ser-Gly-chloromethyl ketone. In terms of biological role, cell surface glycoprotein serine protease that participates in extracellular matrix degradation and involved in many cellular processes including tissue remodeling, fibrosis, wound healing, inflammation and tumor growth. Both plasma membrane and soluble forms exhibit post-proline cleaving endopeptidase activity, with a marked preference for Ala/Ser-Gly-Pro-Ser/Asn/Ala consensus sequences, on substrate such as alpha-2-antiplasmin SERPINF2 and SPRY2. Degrade also gelatin, heat-denatured type I collagen, but not native collagen type I and IV, vibronectin, tenascin, laminin, fibronectin, fibrin or casein. Also has dipeptidyl peptidase activity, exhibiting the ability to hydrolyze the prolyl bond two residues from the N-terminus of synthetic dipeptide substrates provided that the penultimate residue is proline, with a preference for Ala-Pro, Ile-Pro, Gly-Pro, Arg-Pro and Pro-Pro. Natural neuropeptide hormones for dipeptidyl peptidase are the neuropeptide Y (NPY), peptide YY (PYY), substance P (TAC1) and brain natriuretic peptide 32 (NPPB). The plasma membrane form, in association with either DPP4, PLAUR or integrins, is involved in the pericellular proteolysis of the extracellular matrix (ECM), and hence promotes cell adhesion, migration and invasion through the ECM. Plays a role in tissue remodeling during development and wound healing. Participates in the cell invasiveness towards the ECM in malignant melanoma cancers. Enhances tumor growth progression by increasing angiogenesis, collagen fiber degradation and apoptosis and by reducing antitumor response of the immune system. Promotes glioma cell invasion through the brain parenchyma by degrading the proteoglycan brevican. Acts as a tumor suppressor in melanocytic cells through regulation of cell proliferation and survival in a serine protease activity-independent manner. This chain is Prolyl endopeptidase FAP, found in Mus musculus (Mouse).